A 118-amino-acid chain; its full sequence is V-type proton ATPase subunit G 1 (118 aa).

Ala-2 bears the N-acetylalanine mark. Positions 55-90 (FQSKQQAAMGSQGNLSAEVEQATRRQVQGMQSSQQR) are disordered. Composition is skewed to polar residues over residues 56 to 69 (QSKQ…QGNL) and 78 to 89 (RRQVQGMQSSQQ).

The protein belongs to the V-ATPase G subunit family. As to quaternary structure, V-ATPase is a heteromultimeric enzyme made up of two complexes: the ATP-hydrolytic V1 complex and the proton translocation V0 complex. The V1 complex consists of three catalytic AB heterodimers that form a heterohexamer, three peripheral stalks each consisting of EG heterodimers, one central rotor including subunits D and F, and the regulatory subunits C and H. The proton translocation complex V0 consists of the proton transport subunit a, a ring of proteolipid subunits c9c'', rotary subunit d, subunits e and f, and the accessory subunits ATP6AP1/Ac45 and ATP6AP2/PRR.

It is found in the apical cell membrane. Subunit of the V1 complex of vacuolar(H+)-ATPase (V-ATPase), a multisubunit enzyme composed of a peripheral complex (V1) that hydrolyzes ATP and a membrane integral complex (V0) that translocates protons. V-ATPase is responsible for acidifying and maintaining the pH of intracellular compartments and in some cell types, is targeted to the plasma membrane, where it is responsible for acidifying the extracellular environment. In aerobic conditions, involved in intracellular iron homeostasis, thus triggering the activity of Fe(2+) prolyl hydroxylase (PHD) enzymes, and leading to HIF1A hydroxylation and subsequent proteasomal degradation. This Canis lupus familiaris (Dog) protein is V-type proton ATPase subunit G 1 (ATP6V1G1).